Here is a 500-residue protein sequence, read N- to C-terminus: ATP synthase subunit alpha (500 aa).

168–175 (GDRQTGKT) provides a ligand contact to ATP.

This sequence belongs to the ATPase alpha/beta chains family. F-type ATPases have 2 components, CF(1) - the catalytic core - and CF(0) - the membrane proton channel. CF(1) has five subunits: alpha(3), beta(3), gamma(1), delta(1), epsilon(1). CF(0) has three main subunits: a(1), b(2) and c(9-12). The alpha and beta chains form an alternating ring which encloses part of the gamma chain. CF(1) is attached to CF(0) by a central stalk formed by the gamma and epsilon chains, while a peripheral stalk is formed by the delta and b chains.

The protein resides in the cell membrane. The catalysed reaction is ATP + H2O + 4 H(+)(in) = ADP + phosphate + 5 H(+)(out). Produces ATP from ADP in the presence of a proton gradient across the membrane. The alpha chain is a regulatory subunit. The sequence is that of ATP synthase subunit alpha from Streptococcus suis (strain 98HAH33).